Reading from the N-terminus, the 354-residue chain is Holliday junction branch migration complex subunit RuvB (354 aa).

The tract at residues 1–22 is disordered; that stretch reads MTLQTDDFAPAPARRVVSAAPA. Residues 5 to 194 form a large ATPase domain (RuvB-L) region; sequence TDDFAPAPAR…FGIVARLEFY (190 aa). Over residues 9–22 the composition is skewed to low complexity; the sequence is APAPARRVVSAAPA. ATP contacts are provided by residues Leu-33, Arg-34, Gly-75, Lys-78, Thr-79, Thr-80, 141–143, Arg-184, Tyr-194, and Arg-231; that span reads EDY. Thr-79 contacts Mg(2+). Positions 195–265 are small ATPAse domain (RuvB-S); it reads SAQELARIVK…IAERALAMLD (71 aa). A head domain (RuvB-H) region spans residues 268 to 354; that stretch reads PEGLDVMDRK…GAQAPGLFAV (87 aa). Residues Arg-323 and Arg-328 each contribute to the DNA site.

Belongs to the RuvB family. As to quaternary structure, homohexamer. Forms an RuvA(8)-RuvB(12)-Holliday junction (HJ) complex. HJ DNA is sandwiched between 2 RuvA tetramers; dsDNA enters through RuvA and exits via RuvB. An RuvB hexamer assembles on each DNA strand where it exits the tetramer. Each RuvB hexamer is contacted by two RuvA subunits (via domain III) on 2 adjacent RuvB subunits; this complex drives branch migration. In the full resolvosome a probable DNA-RuvA(4)-RuvB(12)-RuvC(2) complex forms which resolves the HJ.

It localises to the cytoplasm. It carries out the reaction ATP + H2O = ADP + phosphate + H(+). Its function is as follows. The RuvA-RuvB-RuvC complex processes Holliday junction (HJ) DNA during genetic recombination and DNA repair, while the RuvA-RuvB complex plays an important role in the rescue of blocked DNA replication forks via replication fork reversal (RFR). RuvA specifically binds to HJ cruciform DNA, conferring on it an open structure. The RuvB hexamer acts as an ATP-dependent pump, pulling dsDNA into and through the RuvAB complex. RuvB forms 2 homohexamers on either side of HJ DNA bound by 1 or 2 RuvA tetramers; 4 subunits per hexamer contact DNA at a time. Coordinated motions by a converter formed by DNA-disengaged RuvB subunits stimulates ATP hydrolysis and nucleotide exchange. Immobilization of the converter enables RuvB to convert the ATP-contained energy into a lever motion, pulling 2 nucleotides of DNA out of the RuvA tetramer per ATP hydrolyzed, thus driving DNA branch migration. The RuvB motors rotate together with the DNA substrate, which together with the progressing nucleotide cycle form the mechanistic basis for DNA recombination by continuous HJ branch migration. Branch migration allows RuvC to scan DNA until it finds its consensus sequence, where it cleaves and resolves cruciform DNA. In Verminephrobacter eiseniae (strain EF01-2), this protein is Holliday junction branch migration complex subunit RuvB.